We begin with the raw amino-acid sequence, 71 residues long: Translation initiation factor IF-1 (71 aa).

In terms of domain architecture, S1-like spans 1-71; that stretch reads MSKDDLIQFT…LTKGRVIHRH (71 aa).

It belongs to the IF-1 family. As to quaternary structure, component of the 30S ribosomal translation pre-initiation complex which assembles on the 30S ribosome in the order IF-2 and IF-3, IF-1 and N-formylmethionyl-tRNA(fMet); mRNA recruitment can occur at any time during PIC assembly.

It is found in the cytoplasm. One of the essential components for the initiation of protein synthesis. Stabilizes the binding of IF-2 and IF-3 on the 30S subunit to which N-formylmethionyl-tRNA(fMet) subsequently binds. Helps modulate mRNA selection, yielding the 30S pre-initiation complex (PIC). Upon addition of the 50S ribosomal subunit IF-1, IF-2 and IF-3 are released leaving the mature 70S translation initiation complex. The sequence is that of Translation initiation factor IF-1 from Rickettsia felis (strain ATCC VR-1525 / URRWXCal2) (Rickettsia azadi).